Reading from the N-terminus, the 102-residue chain is Small ribosomal subunit protein uS10 (102 aa).

This sequence belongs to the universal ribosomal protein uS10 family. As to quaternary structure, part of the 30S ribosomal subunit.

Functionally, involved in the binding of tRNA to the ribosomes. The polypeptide is Small ribosomal subunit protein uS10 (Streptococcus pyogenes serotype M3 (strain SSI-1)).